The following is a 225-amino-acid chain: GTP cyclohydrolase III (225 aa).

Belongs to the archaeal-type GTP cyclohydrolase family.

The enzyme catalyses GTP + 3 H2O = 2-amino-5-formylamino-6-(5-phospho-D-ribosylamino)pyrimidin-4(3H)-one + 2 phosphate + 2 H(+). Catalyzes the formation of 2-amino-5-formylamino-6-ribofuranosylamino-4(3H)-pyrimidinone ribonucleotide monophosphate and inorganic phosphate from GTP. Also has an independent pyrophosphate phosphohydrolase activity. In Sulfurisphaera tokodaii (strain DSM 16993 / JCM 10545 / NBRC 100140 / 7) (Sulfolobus tokodaii), this protein is GTP cyclohydrolase III.